The following is a 356-amino-acid chain: Phospho-N-acetylmuramoyl-pentapeptide-transferase (356 aa).

10 consecutive transmembrane segments (helical) span residues 25–45, 70–90, 93–113, 138–158, 164–184, 195–215, 235–255, 258–278, 284–304, and 333–353; these read TIAAMLTSGLIVFLFGPSIIA, GTPTMGGLMILTGIVVSAFLW, LSNIYFWVSLLVMLSFGAIGF, FFVAAIAAFIILQIGSSGFAL, YLIHLGWFFIPFSAFVIVATG, GLAIVPVMVAALSFALIAYLC, LAVLLGAVVGAGLGFLWFNAP, AIFMGDTGSLALGGLLGTVAV, IVLVLIGGLFVVEAFSVVIQV, and QVVIRFWIISIVLALIGLSTL.

This sequence belongs to the glycosyltransferase 4 family. MraY subfamily. The cofactor is Mg(2+).

The protein resides in the cell inner membrane. It catalyses the reaction UDP-N-acetyl-alpha-D-muramoyl-L-alanyl-gamma-D-glutamyl-meso-2,6-diaminopimeloyl-D-alanyl-D-alanine + di-trans,octa-cis-undecaprenyl phosphate = di-trans,octa-cis-undecaprenyl diphospho-N-acetyl-alpha-D-muramoyl-L-alanyl-D-glutamyl-meso-2,6-diaminopimeloyl-D-alanyl-D-alanine + UMP. Its pathway is cell wall biogenesis; peptidoglycan biosynthesis. Catalyzes the initial step of the lipid cycle reactions in the biosynthesis of the cell wall peptidoglycan: transfers peptidoglycan precursor phospho-MurNAc-pentapeptide from UDP-MurNAc-pentapeptide onto the lipid carrier undecaprenyl phosphate, yielding undecaprenyl-pyrophosphoryl-MurNAc-pentapeptide, known as lipid I. In Bartonella tribocorum (strain CIP 105476 / IBS 506), this protein is Phospho-N-acetylmuramoyl-pentapeptide-transferase.